A 535-amino-acid polypeptide reads, in one-letter code: High-affinity fructose transporter ght6 (535 aa).

The Cytoplasmic portion of the chain corresponds to 1–9 (MAKILTIVM). The helical transmembrane segment at 10–30 (LVFVSMAGWMFGADTGSIGGI) threads the bilayer. The Extracellular portion of the chain corresponds to 31–58 (TNMRDFQSRYADRYDPVTDTYSYSSARQ). A helical membrane pass occupies residues 59–79 (GLLVGMVNTGTTVGCLLSSPL). At 80–87 (GDRFGKRK) the chain is on the cytoplasmic side. The helical transmembrane segment at 88 to 108 (CIMGWTLVYITGVIVQLTTIP) threads the bilayer. The Extracellular portion of the chain corresponds to 109 to 112 (SWVQ). Residues 113 to 133 (MMVAKIWTGLGIGALSVIAPG) traverse the membrane as a helical segment. At 134-144 (YQSESSPPHIR) the chain is on the cytoplasmic side. A helical membrane pass occupies residues 145–165 (GAIVTTYQLFITLGIFIAACI). The Extracellular segment spans residues 166 to 181 (NMGTHKYTTHPEAQWR). The helical transmembrane segment at 182–202 (VPIGINLLWGILMFFGMLFLP) threads the bilayer. Topologically, residues 203-268 (ESPRYLAVKG…IFSNEIRYRT (66 aa)) are cytoplasmic. The helical transmembrane segment at 269 to 287 (LLGMGVMAFQQLTGNNYFF) threads the bilayer. The Extracellular segment spans residues 288–303 (YYGTQVFRGTGLNSPF). The chain crosses the membrane as a helical span at residues 304–324 (LAALILDAVNFGCTFGAIFVL). Residues 325–330 (EYFGRR) are Cytoplasmic-facing. The chain crosses the membrane as a helical span at residues 331–351 (GPLIVGGVWQSICFFIYASVG). Residues 352-365 (DRALTRPNGTSNHR) lie on the Extracellular side of the membrane. Asn359 carries an N-linked (GlcNAc...) asparagine glycan. A helical membrane pass occupies residues 366–386 (AGAVMIVFSCLFIFSFAQTWA). The Cytoplasmic portion of the chain corresponds to 387–406 (PAAYVIVGESYPIRYRSKCA). Residues 407 to 427 (AVATASNWFWNFMISFFTPFI) traverse the membrane as a helical segment. Residues 428–434 (SNSIGFK) lie on the Extracellular side of the membrane. The chain crosses the membrane as a helical span at residues 435–455 (YGYVFAACNLCAAIIIFLFAK). Topologically, residues 456-535 (ETKGLTLEEI…PQQVTNPVGL (80 aa)) are cytoplasmic. Residues 484–508 (DREDIKQSDSEKERGPTSKLHEYVE) are compositionally biased toward basic and acidic residues. Residues 484 to 535 (DREDIKQSDSEKERGPTSKLHEYVEHAPNSYASTHSTESENYPQQVTNPVGL) form a disordered region. Residues 513–535 (SYASTHSTESENYPQQVTNPVGL) are compositionally biased toward polar residues.

Belongs to the major facilitator superfamily. Sugar transporter (TC 2.A.1.1) family.

The protein resides in the membrane. Its function is as follows. High-affinity fructose transporter. This is High-affinity fructose transporter ght6 (ght6) from Schizosaccharomyces pombe (strain 972 / ATCC 24843) (Fission yeast).